The chain runs to 233 residues: Superoxide dismutase [Mn], mitochondrial (233 aa).

The N-terminal 27 residues, 1 to 27 (MALRSLVTRKNLPSAFKAATGLGQLRG), are a transit peptide targeting the mitochondrion. Residues histidine 55, histidine 103, aspartate 192, and histidine 196 each coordinate Mn(2+).

This sequence belongs to the iron/manganese superoxide dismutase family. As to quaternary structure, homotetramer. Mn(2+) serves as cofactor. In terms of tissue distribution, present in all tissues examined (leaf, petiole, root, latex, callus) with young leaves showing the highest levels in intact plants.

Its subcellular location is the mitochondrion matrix. The catalysed reaction is 2 superoxide + 2 H(+) = H2O2 + O2. Its function is as follows. Destroys superoxide anion radicals which are normally produced within the cells and which are toxic to biological systems. The chain is Superoxide dismutase [Mn], mitochondrial (SODA) from Hevea brasiliensis (Para rubber tree).